The sequence spans 443 residues: Probable glycine dehydrogenase (decarboxylating) subunit 1 (443 aa).

This sequence belongs to the GcvP family. N-terminal subunit subfamily. The glycine cleavage system is composed of four proteins: P, T, L and H. In this organism, the P 'protein' is a heterodimer of two subunits.

It carries out the reaction N(6)-[(R)-lipoyl]-L-lysyl-[glycine-cleavage complex H protein] + glycine + H(+) = N(6)-[(R)-S(8)-aminomethyldihydrolipoyl]-L-lysyl-[glycine-cleavage complex H protein] + CO2. The glycine cleavage system catalyzes the degradation of glycine. The P protein binds the alpha-amino group of glycine through its pyridoxal phosphate cofactor; CO(2) is released and the remaining methylamine moiety is then transferred to the lipoamide cofactor of the H protein. The chain is Probable glycine dehydrogenase (decarboxylating) subunit 1 from Nitratidesulfovibrio vulgaris (strain ATCC 29579 / DSM 644 / CCUG 34227 / NCIMB 8303 / VKM B-1760 / Hildenborough) (Desulfovibrio vulgaris).